A 395-amino-acid chain; its full sequence is Putative gustatory receptor 58a (395 aa).

Residues 1-32 are Cytoplasmic-facing; it reads MLLKFMYIYGIGCGLMPAPLKKGQFLLGYKQR. Residues 33-53 traverse the membrane as a helical segment; sequence WYLIYTACLHGGLLTVLPFTF. Residues 54 to 72 lie on the Extracellular side of the membrane; sequence PHYMYDDSYMSSNPVLKWT. The chain crosses the membrane as a helical span at residues 73-93; it reads FNLTNITRIMAMFSGVLLMWF. Topologically, residues 94–131 are cytoplasmic; the sequence is RRKRILNLGENLILHCLKCKTLDNRSKKYSKLRKRVRN. A helical transmembrane segment spans residues 132–152; that stretch reads VLFQMLLVANLSILLGALILF. Over 153–169 the chain is Extracellular; the sequence is RIHSVQRISKTAMIVAH. Residues 170–190 traverse the membrane as a helical segment; the sequence is ITQFIYVVFMMTGICVILLVL. The Cytoplasmic segment spans residues 191–250; the sequence is HWQSERLQIALKDLCSFLNHEERNSLTLSENKANRSLGKLAKLFKLFAENQRLVREVFRT. The helical transmembrane segment at 251-271 threads the bilayer; that stretch reads FDLPIALLLLKMFVTNVNLVY. The Extracellular segment spans residues 272–288; sequence HGVQFGNDTIETSSYTR. Asparagine 278 is a glycosylation site (N-linked (GlcNAc...) asparagine). Residues 289-309 traverse the membrane as a helical segment; that stretch reads IVGQWVVISHYWSAVLLMNVV. Topologically, residues 310-366 are cytoplasmic; that stretch reads DDVTRRSDLKMGDLLREFSHLELVKRDFHLQLELFSDHLRCHPSTYKVCGLFIFNKQ. A helical membrane pass occupies residues 367 to 387; the sequence is TSLAYFFYVLVQVLVLVQFDL. The Extracellular portion of the chain corresponds to 388 to 395; that stretch reads KNKVEKRN.

The protein belongs to the insect chemoreceptor superfamily. Gustatory receptor (GR) family. Gr22e subfamily. As to expression, expressed in the adult labellar chemosensory neurons.

The protein localises to the cell membrane. In terms of biological role, probable gustatory receptor which mediates acceptance or avoidance behavior, depending on its substrates. In Drosophila melanogaster (Fruit fly), this protein is Putative gustatory receptor 58a (Gr58a).